We begin with the raw amino-acid sequence, 478 residues long: Glycogen synthase (478 aa).

ADP-alpha-D-glucose is bound at residue K15.

This sequence belongs to the glycosyltransferase 1 family. Bacterial/plant glycogen synthase subfamily.

It carries out the reaction [(1-&gt;4)-alpha-D-glucosyl](n) + ADP-alpha-D-glucose = [(1-&gt;4)-alpha-D-glucosyl](n+1) + ADP + H(+). It participates in glycan biosynthesis; glycogen biosynthesis. Synthesizes alpha-1,4-glucan chains using ADP-glucose. The polypeptide is Glycogen synthase (Lactococcus lactis subsp. lactis (strain IL1403) (Streptococcus lactis)).